Consider the following 552-residue polypeptide: Probable protein kinase UbiB (552 aa).

In terms of domain architecture, Protein kinase spans 121–504 (HFDTVPLASA…QGLQRRVVNA (384 aa)). ATP contacts are provided by residues 127–135 (LASASISQV) and K149. The active-site Proton acceptor is the D284. A run of 2 helical transmembrane segments spans residues 501-521 (VVNAIVGSGLLVAAAVLYGLH) and 530-550 (IPVWSLISGCIGALALFSAWW).

It belongs to the ABC1 family. UbiB subfamily.

It is found in the cell inner membrane. It participates in cofactor biosynthesis; ubiquinone biosynthesis [regulation]. Functionally, is probably a protein kinase regulator of UbiI activity which is involved in aerobic coenzyme Q (ubiquinone) biosynthesis. This chain is Probable protein kinase UbiB, found in Xylella fastidiosa (strain M23).